The following is a 348-amino-acid chain: Dihydroorotase (348 aa).

Zn(2+)-binding residues include His-17 and His-19. Substrate is bound by residues 19–21 (HLR) and Asn-45. Residues Lys-103, His-140, and His-178 each contribute to the Zn(2+) site. Lys-103 carries the N6-carboxylysine modification. His-140 is a substrate binding site. Leu-223 lines the substrate pocket. Position 251 (Asp-251) interacts with Zn(2+). Asp-251 is an active-site residue. The substrate site is built by His-255 and Ala-267.

It belongs to the metallo-dependent hydrolases superfamily. DHOase family. Class II DHOase subfamily. As to quaternary structure, homodimer. It depends on Zn(2+) as a cofactor.

It carries out the reaction (S)-dihydroorotate + H2O = N-carbamoyl-L-aspartate + H(+). It participates in pyrimidine metabolism; UMP biosynthesis via de novo pathway; (S)-dihydroorotate from bicarbonate: step 3/3. In terms of biological role, catalyzes the reversible cyclization of carbamoyl aspartate to dihydroorotate. The protein is Dihydroorotase of Klebsiella pneumoniae (strain 342).